The primary structure comprises 150 residues: Flagellar assembly factor FliW (150 aa).

It belongs to the FliW family. In terms of assembly, interacts with translational regulator CsrA and flagellin(s).

It is found in the cytoplasm. In terms of biological role, acts as an anti-CsrA protein, binds CsrA and prevents it from repressing translation of its target genes, one of which is flagellin. Binds to flagellin and participates in the assembly of the flagellum. This is Flagellar assembly factor FliW from Leptospira borgpetersenii serovar Hardjo-bovis (strain L550).